Reading from the N-terminus, the 453-residue chain is Tubulin alpha chain (453 aa).

Q11 contributes to the GTP binding site. At K40 the chain carries N6-acetyllysine. GTP-binding residues include E71, G144, T145, T179, N206, and N228. Position 71 (E71) interacts with Mg(2+). E254 is a catalytic residue.

Belongs to the tubulin family. In terms of assembly, dimer of alpha and beta chains. A typical microtubule is a hollow water-filled tube with an outer diameter of 25 nm and an inner diameter of 15 nM. Alpha-beta heterodimers associate head-to-tail to form protofilaments running lengthwise along the microtubule wall with the beta-tubulin subunit facing the microtubule plus end conferring a structural polarity. Microtubules usually have 13 protofilaments but different protofilament numbers can be found in some organisms and specialized cells. It depends on Mg(2+) as a cofactor. In terms of processing, undergoes a tyrosination/detyrosination cycle, the cyclic removal and re-addition of a C-terminal tyrosine residue by the enzymes tubulin tyrosine carboxypeptidase (TTCP) and tubulin tyrosine ligase (TTL), respectively. Post-translationally, acetylation of alpha chains at Lys-40 stabilizes microtubules and affects affinity and processivity of microtubule motors. This modification has a role in multiple cellular functions, ranging from cell motility, cell cycle progression or cell differentiation to intracellular trafficking and signaling.

The protein resides in the cytoplasm. It is found in the cytoskeleton. The enzyme catalyses GTP + H2O = GDP + phosphate + H(+). Tubulin is the major constituent of microtubules, a cylinder consisting of laterally associated linear protofilaments composed of alpha- and beta-tubulin heterodimers. Microtubules grow by the addition of GTP-tubulin dimers to the microtubule end, where a stabilizing cap forms. Below the cap, tubulin dimers are in GDP-bound state, owing to GTPase activity of alpha-tubulin. In Plasmodium falciparum (isolate K1 / Thailand), this protein is Tubulin alpha chain.